We begin with the raw amino-acid sequence, 157 residues long: Protein Smg homolog (157 aa).

The protein belongs to the Smg family.

The chain is Protein Smg homolog from Alkalilimnicola ehrlichii (strain ATCC BAA-1101 / DSM 17681 / MLHE-1).